The sequence spans 489 residues: UDP-N-acetylmuramate--L-alanine ligase (489 aa).

An ATP-binding site is contributed by 130-136 (GTHGKTS).

This sequence belongs to the MurCDEF family.

It is found in the cytoplasm. The enzyme catalyses UDP-N-acetyl-alpha-D-muramate + L-alanine + ATP = UDP-N-acetyl-alpha-D-muramoyl-L-alanine + ADP + phosphate + H(+). Its pathway is cell wall biogenesis; peptidoglycan biosynthesis. Its function is as follows. Cell wall formation. The polypeptide is UDP-N-acetylmuramate--L-alanine ligase (Corynebacterium efficiens (strain DSM 44549 / YS-314 / AJ 12310 / JCM 11189 / NBRC 100395)).